A 127-amino-acid polypeptide reads, in one-letter code: Aspartate 1-decarboxylase (127 aa).

Catalysis depends on Ser-25, which acts as the Schiff-base intermediate with substrate; via pyruvic acid. Residue Ser-25 is modified to Pyruvic acid (Ser). A substrate-binding site is contributed by Thr-57. The Proton donor role is filled by Tyr-58. Residue 73-75 (GAA) participates in substrate binding.

Belongs to the PanD family. As to quaternary structure, heterooctamer of four alpha and four beta subunits. Requires pyruvate as cofactor. Is synthesized initially as an inactive proenzyme, which is activated by self-cleavage at a specific serine bond to produce a beta-subunit with a hydroxyl group at its C-terminus and an alpha-subunit with a pyruvoyl group at its N-terminus.

The protein localises to the cytoplasm. It catalyses the reaction L-aspartate + H(+) = beta-alanine + CO2. The protein operates within cofactor biosynthesis; (R)-pantothenate biosynthesis; beta-alanine from L-aspartate: step 1/1. Functionally, catalyzes the pyruvoyl-dependent decarboxylation of aspartate to produce beta-alanine. This chain is Aspartate 1-decarboxylase, found in Geobacillus sp. (strain WCH70).